The following is a 239-amino-acid chain: Probable transcriptional regulatory protein Bcer98_0465 (239 aa).

The protein belongs to the TACO1 family. YeeN subfamily.

It is found in the cytoplasm. This Bacillus cytotoxicus (strain DSM 22905 / CIP 110041 / 391-98 / NVH 391-98) protein is Probable transcriptional regulatory protein Bcer98_0465.